Here is a 368-residue protein sequence, read N- to C-terminus: 4-hydroxy-3-methylbut-2-en-1-yl diphosphate synthase (flavodoxin) (368 aa).

4 residues coordinate [4Fe-4S] cluster: Cys271, Cys274, Cys306, and Glu313.

This sequence belongs to the IspG family. Requires [4Fe-4S] cluster as cofactor.

It carries out the reaction (2E)-4-hydroxy-3-methylbut-2-enyl diphosphate + oxidized [flavodoxin] + H2O + 2 H(+) = 2-C-methyl-D-erythritol 2,4-cyclic diphosphate + reduced [flavodoxin]. Its pathway is isoprenoid biosynthesis; isopentenyl diphosphate biosynthesis via DXP pathway; isopentenyl diphosphate from 1-deoxy-D-xylulose 5-phosphate: step 5/6. In terms of biological role, converts 2C-methyl-D-erythritol 2,4-cyclodiphosphate (ME-2,4cPP) into 1-hydroxy-2-methyl-2-(E)-butenyl 4-diphosphate. The polypeptide is 4-hydroxy-3-methylbut-2-en-1-yl diphosphate synthase (flavodoxin) (Haemophilus influenzae (strain PittGG)).